The following is a 302-amino-acid chain: Sulfate adenylyltransferase subunit 2 (302 aa).

It belongs to the PAPS reductase family. CysD subfamily. As to quaternary structure, heterodimer composed of CysD, the smaller subunit, and CysN.

The catalysed reaction is sulfate + ATP + H(+) = adenosine 5'-phosphosulfate + diphosphate. It functions in the pathway sulfur metabolism; hydrogen sulfide biosynthesis; sulfite from sulfate: step 1/3. In terms of biological role, with CysN forms the ATP sulfurylase (ATPS) that catalyzes the adenylation of sulfate producing adenosine 5'-phosphosulfate (APS) and diphosphate, the first enzymatic step in sulfur assimilation pathway. APS synthesis involves the formation of a high-energy phosphoric-sulfuric acid anhydride bond driven by GTP hydrolysis by CysN coupled to ATP hydrolysis by CysD. This is Sulfate adenylyltransferase subunit 2 from Psychromonas ingrahamii (strain DSM 17664 / CCUG 51855 / 37).